The following is a 665-amino-acid chain: DNA ligase (665 aa).

NAD(+)-binding positions include 32–36 (DSEYD), 81–82 (SL), and Glu110. Lys112 acts as the N6-AMP-lysine intermediate in catalysis. Residues Arg133, Glu167, Lys283, and Lys307 each coordinate NAD(+). Cys401, Cys404, Cys419, and Cys424 together coordinate Zn(2+). A BRCT domain is found at 586–665 (EGHPDFSGKT…AAFIEKQNGI (80 aa)).

Belongs to the NAD-dependent DNA ligase family. LigA subfamily. Mg(2+) serves as cofactor. Mn(2+) is required as a cofactor.

The enzyme catalyses NAD(+) + (deoxyribonucleotide)n-3'-hydroxyl + 5'-phospho-(deoxyribonucleotide)m = (deoxyribonucleotide)n+m + AMP + beta-nicotinamide D-nucleotide.. Functionally, DNA ligase that catalyzes the formation of phosphodiester linkages between 5'-phosphoryl and 3'-hydroxyl groups in double-stranded DNA using NAD as a coenzyme and as the energy source for the reaction. It is essential for DNA replication and repair of damaged DNA. The chain is DNA ligase from Staphylococcus epidermidis (strain ATCC 35984 / DSM 28319 / BCRC 17069 / CCUG 31568 / BM 3577 / RP62A).